The following is a 180-amino-acid chain: Acireductone dioxygenase (180 aa).

Fe(2+) contacts are provided by His97, His99, Glu103, and His141. Ni(2+)-binding residues include His97, His99, Glu103, and His141.

Belongs to the acireductone dioxygenase (ARD) family. As to quaternary structure, monomer. It depends on Fe(2+) as a cofactor. Ni(2+) serves as cofactor.

The catalysed reaction is 1,2-dihydroxy-5-(methylsulfanyl)pent-1-en-3-one + O2 = 3-(methylsulfanyl)propanoate + CO + formate + 2 H(+). It catalyses the reaction 1,2-dihydroxy-5-(methylsulfanyl)pent-1-en-3-one + O2 = 4-methylsulfanyl-2-oxobutanoate + formate + 2 H(+). The protein operates within amino-acid biosynthesis; L-methionine biosynthesis via salvage pathway; L-methionine from S-methyl-5-thio-alpha-D-ribose 1-phosphate: step 5/6. Its function is as follows. Catalyzes 2 different reactions between oxygen and the acireductone 1,2-dihydroxy-3-keto-5-methylthiopentene (DHK-MTPene) depending upon the metal bound in the active site. Fe-containing acireductone dioxygenase (Fe-ARD) produces formate and 2-keto-4-methylthiobutyrate (KMTB), the alpha-ketoacid precursor of methionine in the methionine recycle pathway. Ni-containing acireductone dioxygenase (Ni-ARD) produces methylthiopropionate, carbon monoxide and formate, and does not lie on the methionine recycle pathway. The sequence is that of Acireductone dioxygenase from Cronobacter sakazakii (strain ATCC BAA-894) (Enterobacter sakazakii).